We begin with the raw amino-acid sequence, 280 residues long: MNNSIKLKRRLTQSLTYLYLIGLSIVIIYPLLITIMSAFKAGNVSAFKLDTNIDLNFDNFKGLFTETLYGTWYLNTLIIALITMAVQTSIIVLAGYAYSRYNFLARKQSLVFFLIIQMVPTMAALTAFFVMALMLNALNHNWFLIFLYVGGGIPMNAWLMKGYFDTVPMSLDESAKLDGAGHFRRFWQIVLPLVRPMVAVQALWAFMGPFGDYILSSFLLREKEYFTVAVGLQTFVNNAKNLKIAYFSAGAILIALPICILFFFLQKNFVSGLTSGGDKG.

Helical transmembrane passes span 15–35 (LTYL…LITI), 77–97 (LIIA…AGYA), 110–130 (LVFF…AFFV), 142–162 (WFLI…LMKG), 200–220 (VQAL…SFLL), and 244–264 (IAYF…LFFF). The 193-residue stretch at 73-265 (YLNTLIIALI…LPICILFFFL (193 aa)) folds into the ABC transmembrane type-1 domain.

Belongs to the binding-protein-dependent transport system permease family. MalFG subfamily.

It is found in the cell membrane. Part of the binding-protein-dependent transport system for maltodextrin; probably responsible for the translocation of the substrate across the membrane. The protein is Maltodextrin transport system permease protein MalD (malD) of Streptococcus pneumoniae (strain ATCC BAA-255 / R6).